The primary structure comprises 267 residues: Protein BMH1 (267 aa).

The residue at position 2 (S2) is an N-acetylserine. Residue K76 forms a Glycyl lysine isopeptide (Lys-Gly) (interchain with G-Cter in ubiquitin) linkage. S89 is modified (phosphoserine). The tract at residues 236-267 (DMSESGQAEDQQQQQQHQQQQPPAAAEGEAPK) is disordered. Low complexity predominate over residues 243 to 267 (AEDQQQQQQHQQQQPPAAAEGEAPK).

Belongs to the 14-3-3 family. As to quaternary structure, homodimer. Interacts with NTH1 (via N-terminus when phosphorylated by PKA); the interaction is direct and activates NTH1. Interacts with FIN1.

Involved in growth regulation. This chain is Protein BMH1 (BMH1), found in Saccharomyces cerevisiae (strain ATCC 204508 / S288c) (Baker's yeast).